Here is a 201-residue protein sequence, read N- to C-terminus: dITP/XTP pyrophosphatase (201 aa).

Residue 8-13 (SNNPGK) coordinates substrate. Positions 40 and 69 each coordinate Mg(2+). Asp-69 acts as the Proton acceptor in catalysis. Residues Ser-70, 155–158 (FGYD), Lys-178, and 183–184 (HR) each bind substrate.

This sequence belongs to the HAM1 NTPase family. As to quaternary structure, homodimer. The cofactor is Mg(2+).

It catalyses the reaction XTP + H2O = XMP + diphosphate + H(+). It carries out the reaction dITP + H2O = dIMP + diphosphate + H(+). The enzyme catalyses ITP + H2O = IMP + diphosphate + H(+). Functionally, pyrophosphatase that catalyzes the hydrolysis of nucleoside triphosphates to their monophosphate derivatives, with a high preference for the non-canonical purine nucleotides XTP (xanthosine triphosphate), dITP (deoxyinosine triphosphate) and ITP. Seems to function as a house-cleaning enzyme that removes non-canonical purine nucleotides from the nucleotide pool, thus preventing their incorporation into DNA/RNA and avoiding chromosomal lesions. The protein is dITP/XTP pyrophosphatase of Ralstonia nicotianae (strain ATCC BAA-1114 / GMI1000) (Ralstonia solanacearum).